Here is a 472-residue protein sequence, read N- to C-terminus: Cell division protein FtsP (472 aa).

The tat-type signal signal peptide spans 1–27 (MSLSRRQFIQASGIALCAGAMPLTARA).

This sequence belongs to the FtsP family. Predicted to be exported by the Tat system. The position of the signal peptide cleavage has not been experimentally proven.

It localises to the periplasm. Functionally, cell division protein that is required for growth during stress conditions. May be involved in protecting or stabilizing the divisomal assembly under conditions of stress. The chain is Cell division protein FtsP from Dickeya dadantii (strain 3937) (Erwinia chrysanthemi (strain 3937)).